The primary structure comprises 356 residues: Alanine racemase, catabolic (356 aa).

K35 functions as the Proton acceptor; specific for D-alanine in the catalytic mechanism. N6-(pyridoxal phosphate)lysine is present on K35. Position 130 (R130) interacts with substrate. Y253 acts as the Proton acceptor; specific for L-alanine in catalysis. M301 is a binding site for substrate.

It belongs to the alanine racemase family. It depends on pyridoxal 5'-phosphate as a cofactor.

The catalysed reaction is L-alanine = D-alanine. Functionally, isomerizes L-alanine to D-alanine which is then oxidized to pyruvate by DadA. The chain is Alanine racemase, catabolic (dadX) from Salmonella typhi.